The sequence spans 336 residues: DNA-directed RNA polymerase subunit alpha (336 aa).

Residues M1–E233 are alpha N-terminal domain (alpha-NTD). The tract at residues I247–S336 is alpha C-terminal domain (alpha-CTD).

The protein belongs to the RNA polymerase alpha chain family. Homodimer. The RNAP catalytic core consists of 2 alpha, 1 beta, 1 beta' and 1 omega subunit. When a sigma factor is associated with the core the holoenzyme is formed, which can initiate transcription.

It catalyses the reaction RNA(n) + a ribonucleoside 5'-triphosphate = RNA(n+1) + diphosphate. Functionally, DNA-dependent RNA polymerase catalyzes the transcription of DNA into RNA using the four ribonucleoside triphosphates as substrates. This is DNA-directed RNA polymerase subunit alpha from Nitrosomonas europaea (strain ATCC 19718 / CIP 103999 / KCTC 2705 / NBRC 14298).